The sequence spans 193 residues: Cell wall galactomannoprotein (193 aa).

The first 17 residues, 1-17, serve as a signal peptide directing secretion; it reads MFFRILALLPLVFLVTA. Residues asparagine 38 and asparagine 173 are each glycosylated (N-linked (GlcNAc...) asparagine).

Belongs to the cell wall mannoprotein 1 family. In terms of processing, galactomannoprotein, glycosylated.

Its subcellular location is the secreted. The protein resides in the cell wall. Constitutive protein of the cell wall. In Armillaria ostoyae (Armillaria root rot fungus), this protein is Cell wall galactomannoprotein.